A 334-amino-acid polypeptide reads, in one-letter code: Dipeptide transport ATP-binding protein DppF (334 aa).

One can recognise an ABC transporter domain in the interval 13–262; it reads LQAIDLKKHY…PRHPYTQALL (250 aa). Residue 55–62 participates in ATP binding; that stretch reads GESGCGKS.

It belongs to the ABC transporter superfamily. The complex is composed of two ATP-binding proteins (DppD and DppF), two transmembrane proteins (DppB and DppC) and a solute-binding protein (DppA). MppA can replace DppA as binding protein for heme and ALA transport.

The protein localises to the cell inner membrane. It carries out the reaction a dipeptide(out) + ATP + H2O = a dipeptide(in) + ADP + phosphate + H(+). Part of the ABC transporter DppABCDF involved in dipeptide transport. Responsible for energy coupling to the transport system. In terms of biological role, when a foreign outer membrane heme receptor is expressed in E.coli, DppABCDF can also transport heme and its precursor, 5-aminolevulinic acid (ALA), from the periplasm into the cytoplasm. The protein is Dipeptide transport ATP-binding protein DppF (dppF) of Escherichia coli (strain K12).